We begin with the raw amino-acid sequence, 269 residues long: Transmembrane protein 41B (269 aa).

6 consecutive transmembrane segments (helical) span residues 30–50 (TSLLILVSIFTIAAFLMFLVY), 87–107 (FYVQVLVAYFATYVFLQTFAI), 125–147 (LALFLVCLCSGLGASFCYMLSYL), 175–195 (LINYIIFLRITPFLPNWFINI), 203–223 (PLKVFFIGTFLGVAPPSFVAI), and 240–260 (SWNSLFVLMILAILSILPALF). The segment at 118–229 (GFLYPFPLAL…FVAIKAGTTL (112 aa)) is VTT domain; required for its function in autophagy.

This sequence belongs to the TMEM41 family.

It localises to the endoplasmic reticulum membrane. The protein resides in the endomembrane system. The catalysed reaction is a 1,2-diacyl-sn-glycero-3-phospho-L-serine(in) = a 1,2-diacyl-sn-glycero-3-phospho-L-serine(out). The enzyme catalyses cholesterol(in) = cholesterol(out). It catalyses the reaction a 1,2-diacyl-sn-glycero-3-phosphocholine(in) = a 1,2-diacyl-sn-glycero-3-phosphocholine(out). It carries out the reaction a 1,2-diacyl-sn-glycero-3-phosphoethanolamine(in) = a 1,2-diacyl-sn-glycero-3-phosphoethanolamine(out). Phospholipid scramblase involved in lipid homeostasis and membrane dynamics processes. Has phospholipid scramblase activity toward cholesterol and phosphatidylserine, as well as phosphatidylethanolamine and phosphatidylcholine. Required for autophagosome formation: participates in early stages of autophagosome biogenesis at the endoplasmic reticulum (ER) membrane by reequilibrating the leaflets of the ER as lipids are extracted by ATG2 (ATG2A or ATG2B) to mediate autophagosome assembly. In addition to autophagy, involved in other processes in which phospholipid scramblase activity is required. Required for normal motor neuron development. The sequence is that of Transmembrane protein 41B from Gallus gallus (Chicken).